We begin with the raw amino-acid sequence, 208 residues long: MSAGGDFGNPLRKFKLVFLGEQSVGKTSLITRFMYDSFDNTYQATIGIDFLSKTMYLEDRTVRLQLWDTAGQERFRSLIPSYIRDSTVAVVVYDITNVNSFQQTTKWIDDVRTERGSDVIIMLVGNKTDLADKRQVSIEEGERKAKELNVMFIETSAKAGYNVKQLFRRVAAALPGMESTQDRSREDMIDIKLEKPQEQPVNEGGCSC.

Ser2 carries the post-translational modification N-acetylserine. Positions 23, 24, 25, 26, 27, 28, 39, 40, 42, and 45 each coordinate GTP. Thr27 serves as a coordination point for Mg(2+). The Switch 1 signature appears at 32-50 (RFMYDSFDNTYQATIGIDF). 2 residues coordinate Mg(2+): Thr45 and Asp68. The short motif at 69–88 (TAGQERFRSLIPSYIRDSTV) is the Switch 2 element. The GTP site is built by Gly71, Asn126, Lys127, Asp129, Ser156, Ala157, and Lys158. Ser184 is modified (phosphoserine). S-geranylgeranyl cysteine attachment occurs at residues Cys206 and Cys208. Cysteine methyl ester is present on Cys208.

Belongs to the small GTPase superfamily. Rab family. Interacts with BICDL1; leads to its accumulation in the pericentrosomal region. Interacts with SCYL1BP1. Interacts with VSP52. Interacts with RABGAP1. Interacts with GCC2 (via its GRIP domain). Interacts with RAB6IP1 (via its RUN 1 domain). Interacts with TMF1. Interacts with CIMAP3. Interacts (GTP-bound) with APBA1/MINT1 isoform 3, also called Mint1_826, but not with isoform 1. Interacts with RIC1; the interaction is direct with a preference for RAB6A-GDP. Interacts with RGP1; the interaction is direct with a preference for RAB6A-GDP. As to quaternary structure, interacts (GTP-bound) with DYNLRB1; the interaction is direct. Interacts with BICD1. Interacts with BICD2; the interaction is direct. Interacts (GTP-bound) with VPS13B. In terms of assembly, interacts with BICD1. Interacts (GDP-bound) with DYNLRB1; the interaction is direct. Interacts (GTP-bound) with VPS13B. Mg(2+) is required as a cofactor. Prenylated.

The protein localises to the golgi apparatus membrane. Its subcellular location is the cytoplasmic vesicle. It is found in the secretory vesicle. The protein resides in the acrosome membrane. It carries out the reaction GTP + H2O = GDP + phosphate + H(+). Regulated by guanine nucleotide exchange factors (GEFs) which promote the exchange of bound GDP for free GTP. Regulated by GTPase activating proteins (GAPs) which increase the GTP hydrolysis activity. Inhibited by GDP dissociation inhibitors (GDIs). Its function is as follows. The small GTPases Rab are key regulators of intracellular membrane trafficking, from the formation of transport vesicles to their fusion with membranes. Rabs cycle between an inactive GDP-bound form and an active GTP-bound form that is able to recruit to membranes different sets of downstream effectors directly responsible for vesicle formation, movement, tethering and fusion. RAB6A acts as a regulator of COPI-independent retrograde transport from the Golgi apparatus towards the endoplasmic reticulum (ER). Has a low GTPase activity. Recruits VPS13B to the Golgi membrane. Plays a role in neuron projection development. The polypeptide is Ras-related protein Rab-6A (Mus musculus (Mouse)).